A 300-amino-acid chain; its full sequence is E3 ubiquitin-protein ligase RNF212B (300 aa).

An RING-type zinc finger spans residues 6–40 (CNQCFRKDGAHFFVTSCGHIFCKKCVTLEKCAVCG). Residues 88-124 (LIAFYKHRITKLETAMQETQQALVSQDKELSVLRKEN) adopt a coiled-coil conformation. Disordered regions lie at residues 141–251 (YQGS…HTRV) and 280–300 (PYQQ…TTSR). Polar residues predominate over residues 155–169 (TSPSQSVTPRPSFQH). Residues 170 to 183 (SSQVVSRSSSVESV) are compositionally biased toward low complexity. The segment covering 191–200 (GSLGQGGRGL) has biased composition (gly residues). A compositionally biased stretch (polar residues) spans 211–234 (NETPSPASTHSLSYRPSSASSGQG).

As to quaternary structure, homodimer. Autoubiquitinated.

The protein localises to the chromosome. It catalyses the reaction S-ubiquitinyl-[E2 ubiquitin-conjugating enzyme]-L-cysteine + [acceptor protein]-L-lysine = [E2 ubiquitin-conjugating enzyme]-L-cysteine + N(6)-ubiquitinyl-[acceptor protein]-L-lysine.. It functions in the pathway protein modification; protein ubiquitination. Its function is as follows. Ubiquitin E3 ligase that acts as a crucial factor for crossing-over (CO) formation during meiosis. Essential for normal prophase I progression and for ensuring appropriate CO designation in meiosis. Recruits key components of the cross-over machinery either directly ou indirectly, leading to the activation of the MutL-gamma complex. The function of RNF212B in CO designation is dependent on its catalytic activity. This chain is E3 ubiquitin-protein ligase RNF212B (RNF212B), found in Pongo abelii (Sumatran orangutan).